We begin with the raw amino-acid sequence, 212 residues long: Large ribosomal subunit protein uL3 (212 aa).

The tract at residues 119–147 (YQGNIKRWGQSRGPETHGSRYHRIPGSMG) is disordered.

This sequence belongs to the universal ribosomal protein uL3 family. In terms of assembly, part of the 50S ribosomal subunit. Forms a cluster with proteins L14 and L19.

Functionally, one of the primary rRNA binding proteins, it binds directly near the 3'-end of the 23S rRNA, where it nucleates assembly of the 50S subunit. The chain is Large ribosomal subunit protein uL3 from Lactobacillus acidophilus (strain ATCC 700396 / NCK56 / N2 / NCFM).